The sequence spans 92 residues: Protein S100-B (92 aa).

Serine 2 carries the post-translational modification Blocked amino end (Ser); alternate. An N-acetylserine; alternate modification is found at serine 2. EF-hand domains are found at residues 13-48 (DVFH…LEEI) and 49-84 (KEQE…VTTA). A Zn(2+)-binding site is contributed by histidine 16. Residues serine 19, glutamate 22, and aspartate 24 each coordinate Ca(2+). Zn(2+) is bound at residue histidine 26. 7 residues coordinate Ca(2+): lysine 27, glutamate 32, aspartate 62, aspartate 64, aspartate 66, glutamate 68, and glutamate 73. Zn(2+)-binding residues include histidine 86 and histidine 91.

It belongs to the S-100 family. As to quaternary structure, dimer of either two alpha chains, or two beta chains, or one alpha and one beta chain. The S100B dimer binds two molecules of STK38. Interacts with CACYBP in a calcium-dependent manner. Interacts with ATAD3A; this interaction probably occurs in the cytosol prior to ATAD3A mitochondrial targeting. Interacts with S100A6. The S100B dimer interacts with two molecules of CAPZA1. Interacts with AGER. Interacts with PPP5C (via TPR repeats); the interaction is calcium-dependent and modulates PPP5C activity. Interacts with TPPP; this interaction inhibits TPPP dimerization. Interacts with isoform CLSTN3beta of CLSTN3; interaction promotes secretion. Although predominant among the water-soluble brain proteins, S100 is also found in a variety of other tissues.

The protein resides in the cytoplasm. It localises to the nucleus. The protein localises to the secreted. In terms of biological role, small zinc- and- and calcium-binding protein that is highly expressed in astrocytes and constitutes one of the most abundant soluble proteins in brain. Weakly binds calcium but binds zinc very tightly-distinct binding sites with different affinities exist for both ions on each monomer. Physiological concentrations of potassium ion antagonize the binding of both divalent cations, especially affecting high-affinity calcium-binding sites. Acts as a neurotrophic factor that promotes astrocytosis and axonal proliferation. Involved in innervation of thermogenic adipose tissue by acting as an adipocyte-derived neurotrophic factor that promotes sympathetic innervation of adipose tissue. Binds to and initiates the activation of STK38 by releasing autoinhibitory intramolecular interactions within the kinase. Interaction with AGER after myocardial infarction may play a role in myocyte apoptosis by activating ERK1/2 and p53/TP53 signaling. Could assist ATAD3A cytoplasmic processing, preventing aggregation and favoring mitochondrial localization. May mediate calcium-dependent regulation on many physiological processes by interacting with other proteins, such as TPR-containing proteins, and modulating their activity. The protein is Protein S100-B of Homo sapiens (Human).